The primary structure comprises 249 residues: Chitooligosaccharide deacetylase (249 aa).

2 residues coordinate Mg(2+): His-61 and His-125.

This sequence belongs to the YdjC deacetylase family. ChbG subfamily. As to quaternary structure, homodimer. Mg(2+) is required as a cofactor.

It is found in the cytoplasm. The enzyme catalyses N,N'-diacetylchitobiose + H2O = N-acetyl-beta-D-glucosaminyl-(1-&gt;4)-D-glucosamine + acetate. The catalysed reaction is diacetylchitobiose-6'-phosphate + H2O = N'-monoacetylchitobiose-6'-phosphate + acetate. Its pathway is glycan degradation; chitin degradation. In terms of biological role, involved in the degradation of chitin. ChbG is essential for growth on the acetylated chitooligosaccharides chitobiose and chitotriose but is dispensable for growth on cellobiose and chitosan dimer, the deacetylated form of chitobiose. Deacetylation of chitobiose-6-P and chitotriose-6-P is necessary for both the activation of the chb promoter by the regulatory protein ChbR and the hydrolysis of phosphorylated beta-glucosides by the phospho-beta-glucosidase ChbF. Catalyzes the removal of only one acetyl group from chitobiose-6-P to yield monoacetylchitobiose-6-P, the inducer of ChbR and the substrate of ChbF. The chain is Chitooligosaccharide deacetylase from Escherichia coli O7:K1 (strain IAI39 / ExPEC).